A 61-amino-acid chain; its full sequence is Potassium channel toxin alpha-KTx 5.3 (61 aa).

The N-terminal stretch at 1-28 (MHNYYKIVLIMVAFFAVIITFSNIQVEG) is a signal peptide. Cystine bridges form between Cys-31–Cys-49, Cys-36–Cys-54, and Cys-40–Cys-56. The interval 34-37 (KRCQ) is [R/K]XCQ motif. His-59 carries the post-translational modification Histidine amide.

This sequence belongs to the short scorpion toxin superfamily. Potassium channel inhibitor family. Alpha-KTx 05 subfamily. In terms of tissue distribution, expressed by the venom gland.

The protein resides in the secreted. In terms of biological role, blocks small conductance calcium-activated potassium channels (KCNN, SK). Has also been shown to weakly inhibit Kv11.1/KCNH2/ERG1, Kv1.2/KCNA2, Kv1.3/KCNA3 and Kv2.1/KCNB1 voltage-gated potassium channels. In Olivierus martensii (Manchurian scorpion), this protein is Potassium channel toxin alpha-KTx 5.3.